We begin with the raw amino-acid sequence, 708 residues long: Leukotoxin translocation ATP-binding protein LktB (708 aa).

The Peptidase C39 domain occupies 1-126 (MEANHQRNDL…ACYQGQLILV (126 aa)). One can recognise an ABC transmembrane type-1 domain in the interval 155-437 (FLETLIVSIF…LAQLWQDFQQ (283 aa)). A run of 5 helical transmembrane segments spans residues 159-179 (LIVS…FQVV), 192-212 (LNII…LSGL), 270-290 (ALTS…MWYY), 296-316 (LVIL…SPIL), and 389-409 (VMVI…LSIG). Positions 469-704 (ISFKNIRFRY…SNGLYSYLHQ (236 aa)) constitute an ABC transporter domain. 503-510 (GRSGSGKS) lines the ATP pocket.

It belongs to the ABC transporter superfamily. Protein-1 exporter (TC 3.A.1.109) family. In terms of assembly, homodimer.

The protein localises to the cell inner membrane. It catalyses the reaction ATP + H2O + proteinSide 1 = ADP + phosphate + proteinSide 2.. Part of the ABC transporter complex LktBD involved in leukotoxin export. Transmembrane domains (TMD) form a pore in the inner membrane and the ATP-binding domain (NBD) is responsible for energy generation. This chain is Leukotoxin translocation ATP-binding protein LktB (lktB), found in Mannheimia haemolytica (Pasteurella haemolytica).